The primary structure comprises 188 residues: MEDERSLSDICGGRLALHRRYYSPSCLEFCLSCPRISLRSITAVTCTVWLAAYGLFTLCENSMILSAAIFITLLGLLGYLHFVKIDHETLLIIDSLGIQMTSSYASGKESTTFIEMGKVKDVIINEAIYMQKVIYYLCILLKDPVEPHGISQVVPIFQSAKPRLDCLIEVYRSCQEILAHQKAASTSP.

This sequence belongs to the PIGH family. Component of the glycosylphosphatidylinositol-N-acetylglucosaminyltransferase (GPI-GnT) complex composed at least by PIGA, PIGC, PIGH, PIGP, PIGQ, PIGY and DPM2. Interacts with PIGQ.

The protein resides in the cytoplasm. It functions in the pathway glycolipid biosynthesis; glycosylphosphatidylinositol-anchor biosynthesis. Its function is as follows. Part of the glycosylphosphatidylinositol-N-acetylglucosaminyltransferase (GPI-GnT) complex that catalyzes the transfer of N-acetylglucosamine from UDP-N-acetylglucosamine to phosphatidylinositol and participates in the first step of GPI biosynthesis. This chain is Phosphatidylinositol N-acetylglucosaminyltransferase subunit H, found in Bos taurus (Bovine).